Consider the following 652-residue polypeptide: tRNA-guanine(15) transglycosylase (652 aa).

Aspartate 88 acts as the Nucleophile in catalysis. Residues aspartate 123 and alanine 194 each coordinate substrate. Zn(2+)-binding residues include cysteine 280, cysteine 282, and cysteine 285. Residues 577–652 form the PUA domain; sequence KYRVVIDSEV…AAVSVRSGFK (76 aa).

The protein belongs to the archaeosine tRNA-ribosyltransferase family. Zn(2+) is required as a cofactor.

The enzyme catalyses guanosine(15) in tRNA + 7-cyano-7-deazaguanine = 7-cyano-7-carbaguanosine(15) in tRNA + guanine. Its pathway is tRNA modification; archaeosine-tRNA biosynthesis. Its function is as follows. Exchanges the guanine residue with 7-cyano-7-deazaguanine (preQ0) at position 15 in the dihydrouridine loop (D-loop) of archaeal tRNAs. This Methanococcus aeolicus (strain ATCC BAA-1280 / DSM 17508 / OCM 812 / Nankai-3) protein is tRNA-guanine(15) transglycosylase.